Reading from the N-terminus, the 284-residue chain is 2-dehydro-3-deoxyphosphooctonate aldolase (284 aa).

Belongs to the KdsA family.

It is found in the cytoplasm. It carries out the reaction D-arabinose 5-phosphate + phosphoenolpyruvate + H2O = 3-deoxy-alpha-D-manno-2-octulosonate-8-phosphate + phosphate. Its pathway is carbohydrate biosynthesis; 3-deoxy-D-manno-octulosonate biosynthesis; 3-deoxy-D-manno-octulosonate from D-ribulose 5-phosphate: step 2/3. The protein operates within bacterial outer membrane biogenesis; lipopolysaccharide biosynthesis. The polypeptide is 2-dehydro-3-deoxyphosphooctonate aldolase (Glaesserella parasuis serovar 5 (strain SH0165) (Haemophilus parasuis)).